The chain runs to 357 residues: NADH-quinone oxidoreductase subunit H (357 aa).

Transmembrane regions (helical) follow at residues 20–40, 92–112, 127–147, 165–185, 206–226, 254–274, 294–314, and 329–349; these read WLVL…ILCV, ILFV…WAVV, LLYV…AGWA, VSYE…SGSL, FLSW…ISAV, MAFA…SCMA, IPGW…FVWF, and LGWK…AIWM.

The protein belongs to the complex I subunit 1 family. NDH-1 is composed of 14 different subunits. Subunits NuoA, H, J, K, L, M, N constitute the membrane sector of the complex.

The protein localises to the cell inner membrane. It carries out the reaction a quinone + NADH + 5 H(+)(in) = a quinol + NAD(+) + 4 H(+)(out). Its function is as follows. NDH-1 shuttles electrons from NADH, via FMN and iron-sulfur (Fe-S) centers, to quinones in the respiratory chain. The immediate electron acceptor for the enzyme in this species is believed to be ubiquinone. Couples the redox reaction to proton translocation (for every two electrons transferred, four hydrogen ions are translocated across the cytoplasmic membrane), and thus conserves the redox energy in a proton gradient. This subunit may bind ubiquinone. The chain is NADH-quinone oxidoreductase subunit H from Bordetella petrii (strain ATCC BAA-461 / DSM 12804 / CCUG 43448).